Here is a 332-residue protein sequence, read N- to C-terminus: Succinylglutamate desuccinylase (332 aa).

Histidine 59, glutamate 62, and histidine 151 together coordinate Zn(2+). The active site involves glutamate 215.

This sequence belongs to the AspA/AstE family. Succinylglutamate desuccinylase subfamily. Zn(2+) serves as cofactor.

It carries out the reaction N-succinyl-L-glutamate + H2O = L-glutamate + succinate. It participates in amino-acid degradation; L-arginine degradation via AST pathway; L-glutamate and succinate from L-arginine: step 5/5. Its function is as follows. Transforms N(2)-succinylglutamate into succinate and glutamate. The sequence is that of Succinylglutamate desuccinylase from Pseudomonas aeruginosa (strain UCBPP-PA14).